The following is a 96-amino-acid chain: Putative membrane protein insertion efficiency factor (96 aa).

Belongs to the UPF0161 family.

The protein resides in the cell inner membrane. In terms of biological role, could be involved in insertion of integral membrane proteins into the membrane. The chain is Putative membrane protein insertion efficiency factor from Borreliella afzelii (strain PKo) (Borrelia afzelii).